The primary structure comprises 155 residues: Myosin light chain alkali (155 aa).

2 EF-hand domains span residues 7–41 and 80–115; these read REVENVEFVFEVMGSPGEGIDAFDLGDALRALNLN and GCYEDFIECLKLYDKEENGTMLLAELQHALLALGES.

Myosin is a hexamer of 2 heavy chains and 4 light chains.

This chain is Myosin light chain alkali (Mlc1), found in Drosophila virilis (Fruit fly).